A 119-amino-acid polypeptide reads, in one-letter code: Protein TusC (119 aa).

It belongs to the DsrF/TusC family. In terms of assembly, heterohexamer, formed by a dimer of trimers. The hexameric TusBCD complex contains 2 copies each of TusB, TusC and TusD. The TusBCD complex interacts with TusE.

The protein resides in the cytoplasm. In terms of biological role, part of a sulfur-relay system required for 2-thiolation of 5-methylaminomethyl-2-thiouridine (mnm(5)s(2)U) at tRNA wobble positions. The protein is Protein TusC of Buchnera aphidicola subsp. Baizongia pistaciae (strain Bp).